A 279-amino-acid chain; its full sequence is Diaminopimelate epimerase (279 aa).

The substrate site is built by Asn11 and Asn64. Cys73 acts as the Proton donor in catalysis. Residues 74-75 (GN), Asn170, and 187-188 (ER) contribute to the substrate site. Cys196 serves as the catalytic Proton acceptor. 197–198 (GS) is a substrate binding site. A disordered region spans residues 255–279 (NTDHQRRRHSLSRSPSGRPRLQECR).

This sequence belongs to the diaminopimelate epimerase family. As to quaternary structure, homodimer.

The protein resides in the cytoplasm. The enzyme catalyses (2S,6S)-2,6-diaminopimelate = meso-2,6-diaminopimelate. It participates in amino-acid biosynthesis; L-lysine biosynthesis via DAP pathway; DL-2,6-diaminopimelate from LL-2,6-diaminopimelate: step 1/1. Its function is as follows. Catalyzes the stereoinversion of LL-2,6-diaminopimelate (L,L-DAP) to meso-diaminopimelate (meso-DAP), a precursor of L-lysine. In Methanopyrus kandleri (strain AV19 / DSM 6324 / JCM 9639 / NBRC 100938), this protein is Diaminopimelate epimerase.